A 144-amino-acid chain; its full sequence is Maximins 4/H3 type 2 (144 aa).

The first 18 residues, M1–A18, serve as a signal peptide directing secretion. Residues R19–R43 constitute a propeptide that is removed on maturation. Residue N70 is modified to Asparagine amide. Positions T74–R123 are excised as a propeptide. At I143 the chain carries Isoleucine amide.

It belongs to the bombinin family. Expressed by the skin glands.

The protein localises to the secreted. Functionally, maximin-4 shows antibacterial activity against both Gram-positive and Gram-negative bacteria. It also shows antimicrobial activity against the fungus C.albicans, but not against A.flavus nor P.uticale. It has little hemolytic activity. It does not possess a significant cytotoxicity against tumor cell lines. It does not possess a significant anti-HIV activity. Its function is as follows. Maximin-H3 shows antibacterial activity against both Gram-positive and Gram-negative bacteria. It also shows antimicrobial activity against the fungus C.albicans. Shows strong hemolytic activity. The protein is Maximins 4/H3 type 2 of Bombina maxima (Giant fire-bellied toad).